We begin with the raw amino-acid sequence, 509 residues long: Histone deacetylase 2 (509 aa).

A histone deacetylase region spans residues 24-338 (RRVCYFYDPE…WCYETGVALG (315 aa)). The Proton donor/acceptor role is filled by His-158. Residues Asp-193, His-195, and Asp-281 each contribute to the Zn(2+) site. A disordered region spans residues 394–509 (PSVQFEERIP…NAKNEPGSSL (116 aa)). 3 stretches are compositionally biased toward basic and acidic residues: residues 398–409 (FEERIPETKLPE), 418–434 (DERHDPDSDMLLDDHKP), and 448–472 (VKREITETETKDQHGKRLTTEHKVP). The span at 481-494 (SSKQVPTADANSMA) shows a compositional bias: polar residues.

It belongs to the histone deacetylase family. HD Type 1 subfamily. Requires Zn(2+) as cofactor. In terms of tissue distribution, expressed in roots.

The protein resides in the nucleus. It catalyses the reaction N(6)-acetyl-L-lysyl-[histone] + H2O = L-lysyl-[histone] + acetate. Functionally, responsible for the deacetylation of lysine residues on the N-terminal part of the core histones (H2A, H2B, H3 and H4). Histone deacetylation gives a tag for epigenetic repression and plays an important role in transcriptional regulation, cell cycle progression and developmental events. Histone deacetylases act via the formation of large multiprotein complexes. The sequence is that of Histone deacetylase 2 from Oryza sativa subsp. japonica (Rice).